A 284-amino-acid polypeptide reads, in one-letter code: 2-dehydro-3-deoxyphosphooctonate aldolase (284 aa).

It belongs to the KdsA family.

It localises to the cytoplasm. The catalysed reaction is D-arabinose 5-phosphate + phosphoenolpyruvate + H2O = 3-deoxy-alpha-D-manno-2-octulosonate-8-phosphate + phosphate. The protein operates within carbohydrate biosynthesis; 3-deoxy-D-manno-octulosonate biosynthesis; 3-deoxy-D-manno-octulosonate from D-ribulose 5-phosphate: step 2/3. It participates in bacterial outer membrane biogenesis; lipopolysaccharide biosynthesis. The protein is 2-dehydro-3-deoxyphosphooctonate aldolase of Escherichia coli O157:H7.